Reading from the N-terminus, the 308-residue chain is 2-dehydro-3-deoxy-phosphogluconate/2-dehydro-3-deoxy-6-phosphogalactonate aldolase (308 aa).

Residues 57 to 58 (TT), 144 to 146 (YNY), and 169 to 171 (KDT) each bind substrate. The active-site Schiff-base intermediate with substrate is the K169.

The protein belongs to the DapA family. KDPG aldolase subfamily. Homotetramer; dimer of dimers.

It carries out the reaction 2-dehydro-3-deoxy-6-phospho-D-gluconate = D-glyceraldehyde 3-phosphate + pyruvate. It catalyses the reaction 2-dehydro-3-deoxy-6-phospho-D-galactonate = D-glyceraldehyde 3-phosphate + pyruvate. It functions in the pathway carbohydrate acid metabolism; 2-dehydro-3-deoxy-D-gluconate degradation; D-glyceraldehyde 3-phosphate and pyruvate from 2-dehydro-3-deoxy-D-gluconate: step 2/2. Involved in the degradation of glucose and galactose via the Entner-Doudoroff pathway. Catalyzes the reversible cleavage of 2-keto-3-deoxy-6-phosphogluconate (KDPG) and 2-keto-3-deoxygluconate (KDG) forming pyruvate and glyceraldehyde 3-phosphate or glyceraldehyde, respectively. It is also able to catalyze the reversible cleavage of 2-keto-3-deoxy-6-phosphogalactonate (KDPGal) and 2-keto-3-deoxygalactonate (KDGal). The chain is 2-dehydro-3-deoxy-phosphogluconate/2-dehydro-3-deoxy-6-phosphogalactonate aldolase (eda) from Saccharolobus solfataricus (strain ATCC 35092 / DSM 1617 / JCM 11322 / P2) (Sulfolobus solfataricus).